The sequence spans 195 residues: Phosphoheptose isomerase (195 aa).

The SIS domain maps to 36 to 195 (VSKVLQSGNT…IVEYNLFKME (160 aa)). 51–53 (NGG) is a substrate binding site. Zn(2+)-binding residues include His60 and Glu64. Substrate is bound by residues Glu64, 95–96 (ND), 121–123 (STS), Ser126, and Gln173. Zn(2+) contacts are provided by Gln173 and His181.

Belongs to the SIS family. GmhA subfamily. The cofactor is Zn(2+).

It localises to the cytoplasm. The catalysed reaction is 2 D-sedoheptulose 7-phosphate = D-glycero-alpha-D-manno-heptose 7-phosphate + D-glycero-beta-D-manno-heptose 7-phosphate. Its pathway is carbohydrate biosynthesis; D-glycero-D-manno-heptose 7-phosphate biosynthesis; D-glycero-alpha-D-manno-heptose 7-phosphate and D-glycero-beta-D-manno-heptose 7-phosphate from sedoheptulose 7-phosphate: step 1/1. In terms of biological role, catalyzes the isomerization of sedoheptulose 7-phosphate in D-glycero-D-manno-heptose 7-phosphate. The polypeptide is Phosphoheptose isomerase (Leptospira borgpetersenii serovar Hardjo-bovis (strain JB197)).